Consider the following 312-residue polypeptide: Isoflavone reductase homolog (312 aa).

Residues 10–16, Arg35, and Lys44 each bind NADP(+); that span reads GGTGYVG. Lys138 serves as the catalytic Proton acceptor. Residue Arg142 participates in NADP(+) binding. Substrate is bound at residue His270.

The protein belongs to the NmrA-type oxidoreductase family. Isoflavone reductase subfamily.

This is Isoflavone reductase homolog from Lupinus albus (White lupine).